The sequence spans 284 residues: Acetyl-coenzyme A carboxylase carboxyl transferase subunit beta (284 aa).

Residues 25 to 284 enclose the CoA carboxyltransferase N-terminal domain; sequence LWTKCPKCES…ICRMLLQKSA (260 aa). Zn(2+)-binding residues include cysteine 29, cysteine 32, cysteine 48, and cysteine 51. Residues 29–51 form a C4-type zinc finger; sequence CPKCESTLYRAEVRRNLEVCPKC.

It belongs to the AccD/PCCB family. As to quaternary structure, acetyl-CoA carboxylase is a heterohexamer composed of biotin carboxyl carrier protein (AccB), biotin carboxylase (AccC) and two subunits each of ACCase subunit alpha (AccA) and ACCase subunit beta (AccD). The cofactor is Zn(2+).

Its subcellular location is the cytoplasm. It carries out the reaction N(6)-carboxybiotinyl-L-lysyl-[protein] + acetyl-CoA = N(6)-biotinyl-L-lysyl-[protein] + malonyl-CoA. The protein operates within lipid metabolism; malonyl-CoA biosynthesis; malonyl-CoA from acetyl-CoA: step 1/1. Functionally, component of the acetyl coenzyme A carboxylase (ACC) complex. Biotin carboxylase (BC) catalyzes the carboxylation of biotin on its carrier protein (BCCP) and then the CO(2) group is transferred by the transcarboxylase to acetyl-CoA to form malonyl-CoA. The polypeptide is Acetyl-coenzyme A carboxylase carboxyl transferase subunit beta (Hydrogenovibrio crunogenus (strain DSM 25203 / XCL-2) (Thiomicrospira crunogena)).